The sequence spans 42 residues: Aspartate-semialdehyde dehydrogenase leader peptide (42 aa).

This Streptococcus mutans serotype c (strain ATCC 700610 / UA159) protein is Aspartate-semialdehyde dehydrogenase leader peptide.